Reading from the N-terminus, the 230-residue chain is UPF0758 protein ABC2615 (230 aa).

Residues 104–226 (VISSPEDAAE…FISLKERGFF (123 aa)) enclose the MPN domain. Zn(2+)-binding residues include histidine 175, histidine 177, and aspartate 188. Positions 175–188 (HNHPSGDPSPSPED) match the JAMM motif motif.

The protein belongs to the UPF0758 family.

The polypeptide is UPF0758 protein ABC2615 (Shouchella clausii (strain KSM-K16) (Alkalihalobacillus clausii)).